The chain runs to 173 residues: Atrial gland and califin peptides (173 aa).

A signal peptide spans 1–21 (MKANTMFIILCLSLSTLCVSS). Positions 22–34 (QSTSVHGKIFVPN) are excised as a propeptide. Position 69 is an isoleucine amide (I69). Positions 73-114 (AAGEMEQSEGQNPETKSHSWRKRSVLTPSLSSLGESLESGIS) are excised as a propeptide. The disordered stretch occupies residues 75–94 (GEMEQSEGQNPETKSHSWRK). C141 and C172 form a disulfide bridge. Residue L152 is modified to Leucine amide.

This sequence belongs to the molluscan ELH family. As to quaternary structure, califin A consists of a 36-residue large subunit bound by a single disulfide bond to a 18-residue small subunit.

It localises to the secreted. Functionally, the atrial gland peptide A and peptide B precursors are the source of the 2 peptides that, upon release from this reproductive system gland, initiate the egg-laying process by exciting the bag cell neurons. These neurons, clustered in neural connectives near the abdominal ganglion, in turn release other peptides that act directly on the ganglion and also, via the circulating hemolymph, on many other organs to control the physiological processes of egg-laying. One of these other peptides is the egg-laying hormone. Its function is as follows. Injected in sexually mature animals califin A excites LB and LC cells of the abdominal ganglion and causes egg-laying. The polypeptide is Atrial gland and califin peptides (Aplysia californica (California sea hare)).